A 57-amino-acid polypeptide reads, in one-letter code: Small ribosomal subunit protein bS21 (57 aa).

The protein belongs to the bacterial ribosomal protein bS21 family.

The protein is Small ribosomal subunit protein bS21 of Bacillus pumilus (strain SAFR-032).